A 637-amino-acid chain; its full sequence is Threonine--tRNA ligase (637 aa).

Residues 1–61 (MPNVKLPDGN…KEDCSLIIVT (61 aa)) form the TGS domain. Residues 242 to 533 (DHRKLGKALD…LIEHYAGKLP (292 aa)) are catalytic. 3 residues coordinate Zn(2+): Cys-333, His-384, and His-510.

Belongs to the class-II aminoacyl-tRNA synthetase family. Homodimer. Zn(2+) serves as cofactor.

Its subcellular location is the cytoplasm. The catalysed reaction is tRNA(Thr) + L-threonine + ATP = L-threonyl-tRNA(Thr) + AMP + diphosphate + H(+). In terms of biological role, catalyzes the attachment of threonine to tRNA(Thr) in a two-step reaction: L-threonine is first activated by ATP to form Thr-AMP and then transferred to the acceptor end of tRNA(Thr). Also edits incorrectly charged L-seryl-tRNA(Thr). This is Threonine--tRNA ligase from Legionella pneumophila subsp. pneumophila (strain Philadelphia 1 / ATCC 33152 / DSM 7513).